Here is a 554-residue protein sequence, read N- to C-terminus: Membrane protein insertase YidC (554 aa).

The next 5 helical transmembrane spans lie at 7–24, 362–382, 436–456, 475–495, and 510–530; these read VLWV…DNWQ, VVGN…AVFF, LPVV…LASV, PFFI…SLNP, and PIAF…YYVV.

This sequence belongs to the OXA1/ALB3/YidC family. Type 1 subfamily. Interacts with the Sec translocase complex via SecD. Specifically interacts with transmembrane segments of nascent integral membrane proteins during membrane integration.

The protein localises to the cell inner membrane. Required for the insertion and/or proper folding and/or complex formation of integral membrane proteins into the membrane. Involved in integration of membrane proteins that insert both dependently and independently of the Sec translocase complex, as well as at least some lipoproteins. Aids folding of multispanning membrane proteins. This is Membrane protein insertase YidC from Burkholderia vietnamiensis (strain G4 / LMG 22486) (Burkholderia cepacia (strain R1808)).